The following is a 331-amino-acid chain: tRNA uridine(34) hydroxylase (331 aa).

One can recognise a Rhodanese domain in the interval 123–217 (TDPEVLLIDT…YLEDVPQEES (95 aa)). Cysteine 177 serves as the catalytic Cysteine persulfide intermediate. A disordered region spans residues 293 to 331 (KSRGEEHIGSEAAKAIKKRQAEKKLKRKNYHQHLTQGAE). A compositionally biased stretch (basic residues) spans 307–323 (AIKKRQAEKKLKRKNYH).

Belongs to the TrhO family.

The catalysed reaction is uridine(34) in tRNA + AH2 + O2 = 5-hydroxyuridine(34) in tRNA + A + H2O. Functionally, catalyzes oxygen-dependent 5-hydroxyuridine (ho5U) modification at position 34 in tRNAs. The polypeptide is tRNA uridine(34) hydroxylase (Hahella chejuensis (strain KCTC 2396)).